The following is a 105-amino-acid chain: Flagellar transcriptional regulator FlhD (105 aa).

Belongs to the FlhD family. Homodimer; disulfide-linked. Forms a heterohexamer composed of two FlhC and four FlhD subunits. Each FlhC binds a FlhD dimer, forming a heterotrimer, and a hexamer assembles by dimerization of two heterotrimers.

Its subcellular location is the cytoplasm. Functionally, functions in complex with FlhC as a master transcriptional regulator that regulates transcription of several flagellar and non-flagellar operons by binding to their promoter region. Activates expression of class 2 flagellar genes, including fliA, which is a flagellum-specific sigma factor that turns on the class 3 genes. Also regulates genes whose products function in a variety of physiological pathways. The chain is Flagellar transcriptional regulator FlhD from Cupriavidus pinatubonensis (strain JMP 134 / LMG 1197) (Cupriavidus necator (strain JMP 134)).